The chain runs to 272 residues: Putative pyruvate, phosphate dikinase regulatory protein (272 aa).

154-161 (GVSRTSKS) is an ADP binding site.

This sequence belongs to the pyruvate, phosphate/water dikinase regulatory protein family. PDRP subfamily.

The catalysed reaction is N(tele)-phospho-L-histidyl/L-threonyl-[pyruvate, phosphate dikinase] + ADP = N(tele)-phospho-L-histidyl/O-phospho-L-threonyl-[pyruvate, phosphate dikinase] + AMP + H(+). It catalyses the reaction N(tele)-phospho-L-histidyl/O-phospho-L-threonyl-[pyruvate, phosphate dikinase] + phosphate + H(+) = N(tele)-phospho-L-histidyl/L-threonyl-[pyruvate, phosphate dikinase] + diphosphate. Functionally, bifunctional serine/threonine kinase and phosphorylase involved in the regulation of the pyruvate, phosphate dikinase (PPDK) by catalyzing its phosphorylation/dephosphorylation. This Wolbachia pipientis subsp. Culex pipiens (strain wPip) protein is Putative pyruvate, phosphate dikinase regulatory protein.